We begin with the raw amino-acid sequence, 393 residues long: Formate-dependent phosphoribosylglycinamide formyltransferase (393 aa).

Residues 22–23 and glutamate 82 each bind N(1)-(5-phospho-beta-D-ribosyl)glycinamide; that span reads EL. Residues arginine 114, lysine 155, 160 to 165, 195 to 198, and glutamate 203 each bind ATP; these read SSGKGQ and EGFV. One can recognise an ATP-grasp domain in the interval 119–308; sequence RLAAEELGLP…EFALHVRAIL (190 aa). Mg(2+)-binding residues include glutamate 267 and glutamate 279. N(1)-(5-phospho-beta-D-ribosyl)glycinamide contacts are provided by residues aspartate 286, lysine 356, and 363-364; that span reads RR.

It belongs to the PurK/PurT family. In terms of assembly, homodimer.

The catalysed reaction is N(1)-(5-phospho-beta-D-ribosyl)glycinamide + formate + ATP = N(2)-formyl-N(1)-(5-phospho-beta-D-ribosyl)glycinamide + ADP + phosphate + H(+). Its pathway is purine metabolism; IMP biosynthesis via de novo pathway; N(2)-formyl-N(1)-(5-phospho-D-ribosyl)glycinamide from N(1)-(5-phospho-D-ribosyl)glycinamide (formate route): step 1/1. In terms of biological role, involved in the de novo purine biosynthesis. Catalyzes the transfer of formate to 5-phospho-ribosyl-glycinamide (GAR), producing 5-phospho-ribosyl-N-formylglycinamide (FGAR). Formate is provided by PurU via hydrolysis of 10-formyl-tetrahydrofolate. The protein is Formate-dependent phosphoribosylglycinamide formyltransferase of Nitratidesulfovibrio vulgaris (strain ATCC 29579 / DSM 644 / CCUG 34227 / NCIMB 8303 / VKM B-1760 / Hildenborough) (Desulfovibrio vulgaris).